The sequence spans 75 residues: Bacteriocin lactacin-F subunit LafA (75 aa).

The propeptide occupies 1 to 18 (MKQFNYLSHKDLAVVVGG).

It belongs to the bacteriocin class IIB family. In terms of assembly, this bacteriocin depends upon the complementation of two peptides for activity: LafA and LafX. Associated with a 180 kDa bacteriocin complex.

Heat stable bacteriocin active against Enterococcus faecalis and other Lactobacilli. The chain is Bacteriocin lactacin-F subunit LafA (lafA) from Lactobacillus johnsonii (strain CNCM I-12250 / La1 / NCC 533).